A 300-amino-acid polypeptide reads, in one-letter code: Enoyl-CoA hydratase domain-containing protein 3, mitochondrial (300 aa).

Residues Met-1–Arg-66 constitute a mitochondrion transit peptide. Positions Gly-34–Gln-53 are disordered. An N6-succinyllysine modification is found at Lys-110.

Belongs to the enoyl-CoA hydratase/isomerase family.

It localises to the mitochondrion. May play a role in fatty acid biosynthesis and insulin sensitivity. This is Enoyl-CoA hydratase domain-containing protein 3, mitochondrial from Mus musculus (Mouse).